The following is a 125-amino-acid chain: Ribonuclease VapC19 (125 aa).

Positions 3–122 constitute a PINc domain; sequence LIDTTIAVDH…RHFPMFPDLQ (120 aa). Residues aspartate 5 and aspartate 93 each contribute to the Mg(2+) site.

The protein belongs to the PINc/VapC protein family. Requires Mg(2+) as cofactor.

Its function is as follows. Toxic component of a type II toxin-antitoxin (TA) system. An RNase. Its toxic effect is neutralized by coexpression with cognate antitoxin VapB19. The protein is Ribonuclease VapC19 of Mycobacterium tuberculosis (strain CDC 1551 / Oshkosh).